The following is a 257-amino-acid chain: Global transcriptional regulator CodY (257 aa).

The tract at residues 1–155 (MSLLSKTREL…AATVIGMEIL (155 aa)) is GAF domain. The H-T-H motif DNA-binding region spans 203–222 (ASKVADRVGITRSVIVNALR).

This sequence belongs to the CodY family.

It localises to the cytoplasm. DNA-binding global transcriptional regulator which is involved in the adaptive response to starvation and acts by directly or indirectly controlling the expression of numerous genes in response to nutrient availability. During rapid exponential growth, CodY is highly active and represses genes whose products allow adaptation to nutrient depletion. The protein is Global transcriptional regulator CodY of Staphylococcus saprophyticus subsp. saprophyticus (strain ATCC 15305 / DSM 20229 / NCIMB 8711 / NCTC 7292 / S-41).